Reading from the N-terminus, the 302-residue chain is UDP-3-O-acyl-N-acetylglucosamine deacetylase (302 aa).

H82, H238, and D242 together coordinate Zn(2+). The active-site Proton donor is H265.

It belongs to the LpxC family. Zn(2+) serves as cofactor.

The catalysed reaction is a UDP-3-O-[(3R)-3-hydroxyacyl]-N-acetyl-alpha-D-glucosamine + H2O = a UDP-3-O-[(3R)-3-hydroxyacyl]-alpha-D-glucosamine + acetate. Its pathway is glycolipid biosynthesis; lipid IV(A) biosynthesis; lipid IV(A) from (3R)-3-hydroxytetradecanoyl-[acyl-carrier-protein] and UDP-N-acetyl-alpha-D-glucosamine: step 2/6. Catalyzes the hydrolysis of UDP-3-O-myristoyl-N-acetylglucosamine to form UDP-3-O-myristoylglucosamine and acetate, the committed step in lipid A biosynthesis. The chain is UDP-3-O-acyl-N-acetylglucosamine deacetylase from Leptospira biflexa serovar Patoc (strain Patoc 1 / Ames).